The primary structure comprises 212 residues: Phosphoribosylglycinamide formyltransferase (212 aa).

11-13 (GSN) provides a ligand contact to N(1)-(5-phospho-beta-D-ribosyl)glycinamide. (6R)-10-formyltetrahydrofolate is bound by residues Arg-64, 89–92 (MRIL), and Asn-106. His-108 functions as the Proton donor in the catalytic mechanism. 140-144 (TDELD) contacts (6R)-10-formyltetrahydrofolate. 170 to 173 (QTQE) contacts N(1)-(5-phospho-beta-D-ribosyl)glycinamide.

Belongs to the GART family. Monomer. Homodimer below pH 6.8.

It catalyses the reaction N(1)-(5-phospho-beta-D-ribosyl)glycinamide + (6R)-10-formyltetrahydrofolate = N(2)-formyl-N(1)-(5-phospho-beta-D-ribosyl)glycinamide + (6S)-5,6,7,8-tetrahydrofolate + H(+). It participates in purine metabolism; IMP biosynthesis via de novo pathway; N(2)-formyl-N(1)-(5-phospho-D-ribosyl)glycinamide from N(1)-(5-phospho-D-ribosyl)glycinamide (10-formyl THF route): step 1/1. With respect to regulation, inhibited by N10-(bromoacetyl)-5,8-dideazafolate. Catalyzes the transfer of a formyl group from 10-formyltetrahydrofolate to 5-phospho-ribosyl-glycinamide (GAR), producing 5-phospho-ribosyl-N-formylglycinamide (FGAR) and tetrahydrofolate. In Escherichia coli (strain K12), this protein is Phosphoribosylglycinamide formyltransferase.